We begin with the raw amino-acid sequence, 594 residues long: UvrABC system protein C (594 aa).

The region spanning 14–91 (DQPGCYLMKD…IKKYDPKYNI (78 aa)) is the GIY-YIG domain. Residues 196–231 (KEIRSELETKMYEASEKLEFERAKELRDQIAHIDAI) enclose the UVR domain.

This sequence belongs to the UvrC family. Interacts with UvrB in an incision complex.

The protein resides in the cytoplasm. Its function is as follows. The UvrABC repair system catalyzes the recognition and processing of DNA lesions. UvrC both incises the 5' and 3' sides of the lesion. The N-terminal half is responsible for the 3' incision and the C-terminal half is responsible for the 5' incision. The chain is UvrABC system protein C from Bacillus mycoides (strain KBAB4) (Bacillus weihenstephanensis).